Reading from the N-terminus, the 561-residue chain is Carbohydrate sulfotransferase 15 (561 aa).

Residues 1-80 (MRHCINCCIQ…FLRFKKGKRC (80 aa)) are Cytoplasmic-facing. A helical; Signal-anchor for type II membrane protein transmembrane segment spans residues 81-101 (SLVFGLIIMTLVMASYILSGA). Residues 102 to 561 (HQELLISSPF…ADEAFAWKTT (460 aa)) lie on the Lumenal side of the membrane. Residue 263–267 (KCGTT) participates in 3'-phosphoadenylyl sulfate binding. Asparagine 364 is a glycosylation site (N-linked (GlcNAc...) asparagine). Residues arginine 392 and serine 400 each contribute to the 3'-phosphoadenylyl sulfate site.

Belongs to the sulfotransferase 1 family. In terms of assembly, homodimer; disulfide-linked (Potential). The relevance of homodimerization is however unsure. May interact with phosphorylated proteins in resting B-cells, including HCK. A divalent metal cation is required as a cofactor. The cofactor is glutathione. Post-translationally, glycosylated. In terms of tissue distribution, expressed in B-cell-enriched tissues but not in fetal or adult thymus. Expressed in fetal and adult spleen, lymph node, tonsil, bone marrow and peripheral leukocytes. Not expressed in T-cells. In pro-B, pre-B, and mature B-cell lines, it colocalizes with RAG1.

Its subcellular location is the golgi apparatus membrane. It catalyses the reaction dermatan 4'-sulfate + n 3'-phosphoadenylyl sulfate = dermatan 4',6'-bissulfate + n adenosine 3',5'-bisphosphate + n H(+). It carries out the reaction chondroitin 4'-sulfate + n 3'-phosphoadenylyl sulfate = chondroitin 4',6'-bissulfate + n adenosine 3',5'-bisphosphate + n H(+). With respect to regulation, inhibited by phenyl beta-GalNAc(4,6-SO(4)). Sulfotransferase that transfers sulfate from 3'-phosphoadenosine 5'-phosphosulfate (PAPS) to the C-6 hydroxyl group of the GalNAc 4-sulfate residue of chondroitin sulfate A and forms chondroitin sulfate E containing GlcA-GalNAc(4,6-SO(4)) repeating units. It also transfers sulfate to a unique non-reducing terminal sequence, GalNAc(4SO4)-GlcA(2SO4)-GalNAc(6SO4), to yield a highly sulfated structure similar to the structure found in thrombomodulin chondroitin sulfate. May also act as a B-cell receptor involved in BCR ligation-mediated early activation that mediate regulatory signals key to B-cell development and/or regulation of B-cell-specific RAG expression; however such results are unclear in vivo. In Homo sapiens (Human), this protein is Carbohydrate sulfotransferase 15 (CHST15).